The sequence spans 101 residues: Small ribosomal subunit protein uS14 (101 aa).

This sequence belongs to the universal ribosomal protein uS14 family. As to quaternary structure, part of the 30S ribosomal subunit. Contacts proteins S3 and S10.

Binds 16S rRNA, required for the assembly of 30S particles and may also be responsible for determining the conformation of the 16S rRNA at the A site. This is Small ribosomal subunit protein uS14 from Aliivibrio fischeri (strain MJ11) (Vibrio fischeri).